The chain runs to 337 residues: Biotin synthase (337 aa).

Positions 58 to 288 (AGSELLHACS…AHPHKIIKFA (231 aa)) constitute a Radical SAM core domain. [4Fe-4S] cluster contacts are provided by Cys-76, Cys-80, and Cys-83. Residues Cys-155, Cys-216, and Lys-286 each coordinate [2Fe-2S] cluster.

This sequence belongs to the radical SAM superfamily. Biotin synthase family. Homodimer. [4Fe-4S] cluster is required as a cofactor. Requires [2Fe-2S] cluster as cofactor.

The catalysed reaction is (4R,5S)-dethiobiotin + (sulfur carrier)-SH + 2 reduced [2Fe-2S]-[ferredoxin] + 2 S-adenosyl-L-methionine = (sulfur carrier)-H + biotin + 2 5'-deoxyadenosine + 2 L-methionine + 2 oxidized [2Fe-2S]-[ferredoxin]. The protein operates within cofactor biosynthesis; biotin biosynthesis; biotin from 7,8-diaminononanoate: step 2/2. Catalyzes the conversion of dethiobiotin (DTB) to biotin by the insertion of a sulfur atom into dethiobiotin via a radical-based mechanism. This Pelodictyon phaeoclathratiforme (strain DSM 5477 / BU-1) protein is Biotin synthase.